The following is a 156-amino-acid chain: Small ribosomal subunit protein uS7 (156 aa).

The protein belongs to the universal ribosomal protein uS7 family. In terms of assembly, part of the 30S ribosomal subunit. Contacts proteins S9 and S11.

One of the primary rRNA binding proteins, it binds directly to 16S rRNA where it nucleates assembly of the head domain of the 30S subunit. Is located at the subunit interface close to the decoding center, probably blocks exit of the E-site tRNA. The chain is Small ribosomal subunit protein uS7 from Thermobifida fusca (strain YX).